The chain runs to 725 residues: MGRKVTVATCALNQWALDFEGNFQRILKSIQIAKGKGARYRLGPELEICGYGCWDHYHESDTLLHSLQVLAALLDAPATQDIICDVGMPIMHRNVRYNCLVIFLNRKILLIRPKMALANEGNYRELRWFTPWARSRQTEEYVLPRMLQDLTKQETVPFGDVVLATQDTCIGSEICEELWTPCSPHVNMGLDGVEIITNASGSHHVLRKAHTRVDLVTMATSKNGGIYLLANQKGCDGHLLYYDGCAMIAMNGSIFAQGTQFSLDDVEVLTATLDLEDVRSYRAKISSRNLEATRVNPYPRVTVDFALSVSEDLLEPVSEPVEWTYHRPEEEISLGPACWLWDFLRRNNQAGFFLPLSGGVDSAASACVVYSMCCLVCEAVKSGNQQVLTDVQNLVDESSYTPQDPRELCGRLLTTCYMASENSSQETHNRATELAQQIGSYHISLNIDPAVKAILGIFSLVTGKFPRFSAHGGSSRENLALQNVQARIRMVLAYLFAQLSLWSRGARGSLLVLGSANVDESLLGYLTKYDCSSADINPIGGISKTDLRAFVQLCAERFQLPVLQAILSAPATAELEPLADGQVSQMDEEDMGMTYTELSIFGRLRKVAKAGPYSMFCKLLNMWKDSCTPRQVAEKVKRFFSKYSINRHKMTTLTPAYHAENYSPDDNRFDLRPFLYNTRWPWQFLCIDNQVVQLERKTSQTLEEQIQEHFKEPSPIWKQLLPKDP.

The region spanning 5-275 (VTVATCALNQ…VEVLTATLDL (271 aa)) is the CN hydrolase domain. Glu45 functions as the Proton acceptor; for glutaminase activity in the catalytic mechanism. Lys114 acts as the For glutaminase activity in catalysis. Cys175 acts as the Nucleophile; for glutaminase activity in catalysis. The interval 325 to 706 (YHRPEEEISL…KTSQTLEEQI (382 aa)) is ligase. ATP is bound at residue 355–362 (PLSGGVDS). Ser357 is an active-site residue.

This sequence in the C-terminal section; belongs to the NAD synthetase family. In terms of assembly, homohexamer.

The catalysed reaction is deamido-NAD(+) + L-glutamine + ATP + H2O = L-glutamate + AMP + diphosphate + NAD(+) + H(+). It participates in cofactor biosynthesis; NAD(+) biosynthesis; NAD(+) from deamido-NAD(+) (L-Gln route): step 1/1. In terms of biological role, catalyzes the final step of the nicotinamide adenine dinucleotide (NAD) de novo synthesis pathway, the ATP-dependent amidation of deamido-NAD using L-glutamine as a nitrogen source. In Rattus norvegicus (Rat), this protein is Glutamine-dependent NAD(+) synthetase (Nadsyn1).